We begin with the raw amino-acid sequence, 391 residues long: 4-hydroxy-3-methylbut-2-en-1-yl diphosphate synthase (flavodoxin) (391 aa).

[4Fe-4S] cluster is bound by residues C282, C285, C317, and E324.

The protein belongs to the IspG family. It depends on [4Fe-4S] cluster as a cofactor.

The catalysed reaction is (2E)-4-hydroxy-3-methylbut-2-enyl diphosphate + oxidized [flavodoxin] + H2O + 2 H(+) = 2-C-methyl-D-erythritol 2,4-cyclic diphosphate + reduced [flavodoxin]. Its pathway is isoprenoid biosynthesis; isopentenyl diphosphate biosynthesis via DXP pathway; isopentenyl diphosphate from 1-deoxy-D-xylulose 5-phosphate: step 5/6. Converts 2C-methyl-D-erythritol 2,4-cyclodiphosphate (ME-2,4cPP) into 1-hydroxy-2-methyl-2-(E)-butenyl 4-diphosphate. In Acidothermus cellulolyticus (strain ATCC 43068 / DSM 8971 / 11B), this protein is 4-hydroxy-3-methylbut-2-en-1-yl diphosphate synthase (flavodoxin).